The following is a 133-amino-acid chain: Norrin (133 aa).

Residues 1 to 24 (MRKHVLAASFSMLSLLVIMGDTDS) form the signal peptide. Cystine bridges form between Cys-39–Cys-96, Cys-55–Cys-110, Cys-65–Cys-126, and Cys-69–Cys-128. Residues 39–132 (CMRHHYVDSI…ILSCHCEECN (94 aa)) enclose the CTCK domain.

As to quaternary structure, homodimer; disulfide-linked. Component of a complex, at least composed of TSPAN12, FZD4, LRP5/6 and norrin (NDP). Binds FZD4 with high affinity. Interacts with LRP6 (via Beta-propellers 1 and 2). In terms of tissue distribution, expressed in the outer nuclear, inner nuclear and ganglion cell layers of the retina, and in fetal and adult brain.

Its subcellular location is the secreted. In terms of biological role, activates the canonical Wnt signaling pathway through FZD4 and LRP5 coreceptor. Plays a central role in retinal vascularization by acting as a ligand for FZD4 that signals via stabilizing beta-catenin (CTNNB1) and activating LEF/TCF-mediated transcriptional programs. Acts in concert with TSPAN12 to activate FZD4 independently of the Wnt-dependent activation of FZD4, suggesting the existence of a Wnt-independent signaling that also promote accumulation the beta-catenin (CTNNB1). May be involved in a pathway that regulates neural cell differentiation and proliferation. Possible role in neuroectodermal cell-cell interaction. The sequence is that of Norrin (NDP) from Homo sapiens (Human).